We begin with the raw amino-acid sequence, 527 residues long: MSLQMVTVGHNIALIQPGFSLMNFDGQVFFFGQKGWPKRSCPTGVFHFDIKQNHLKLKPAIFSKDSCYLPPLRYPATCSYKGSIDSDKHQYIIHGGKTPNNELSDKIYIMSVACKNNKKVTFRCTEKDLVGDVPEPRYGHSIDVVYSRGKSMGVLFGGRSYMPSTQRTTEKWNSVADCLPHVFLIDFEFGCATSYILPELQDGLSFHVSIARNDTVYILGGHSLASNIRPANLYRIRVDLPLGTPAVNCTVLPGGISVSSAILTQTNNDEFVIVGGYQLENQKRMVCSLVSLGDNTIEISEMETPDWTSDIKHSKIWFGSNMGNGTIFLGIPGDNKQAMSEAFYFYTLRCSEEDLSEDQKIVSNSQTSTEDPGDSTPFEDSEEFCFSAEATSFDGDDEFDTYNEDDEDDESVTGYWITCCPTCDVDINTWVPFYSTELNKPAMIYCSHGDGHWVHAQCMDLEERTLIHLSEGSNKYYCNEHVQIARALQTPKRNPPLQKPPMKSLHKKGSGKVLTPAKKSFLRRLFD.

Residues 359–380 (QKIVSNSQTSTEDPGDSTPFED) are disordered. The segment covering 361-370 (IVSNSQTSTE) has biased composition (polar residues). Residues 371 to 380 (DPGDSTPFED) show a composition bias toward acidic residues. A PHD-type; atypical zinc finger spans residues 416 to 484 (WITCCPTCDV…KYYCNEHVQI (69 aa)). Positions 419, 423, 446, 452, 455, 458, 478, and 481 each coordinate Zn(2+). The tract at residues 490–511 (TPKRNPPLQKPPMKSLHKKGSG) is disordered.

It belongs to the RAG2 family. In terms of assembly, component of the RAG complex composed of core components RAG1 and RAG2, and associated component HMGB1 or HMGB2. As to expression, maturing lymphoid cells.

The protein localises to the nucleus. In terms of biological role, core component of the RAG complex, a multiprotein complex that mediates the DNA cleavage phase during V(D)J recombination. V(D)J recombination assembles a diverse repertoire of immunoglobulin and T-cell receptor genes in developing B and T-lymphocytes through rearrangement of different V (variable), in some cases D (diversity), and J (joining) gene segments. DNA cleavage by the RAG complex occurs in 2 steps: a first nick is introduced in the top strand immediately upstream of the heptamer, generating a 3'-hydroxyl group that can attack the phosphodiester bond on the opposite strand in a direct transesterification reaction, thereby creating 4 DNA ends: 2 hairpin coding ends and 2 blunt, 5'-phosphorylated ends. The chromatin structure plays an essential role in the V(D)J recombination reactions and the presence of histone H3 trimethylated at 'Lys-4' (H3K4me3) stimulates both the nicking and haipinning steps. The RAG complex also plays a role in pre-B cell allelic exclusion, a process leading to expression of a single immunoglobulin heavy chain allele to enforce clonality and monospecific recognition by the B-cell antigen receptor (BCR) expressed on individual B-lymphocytes. The introduction of DNA breaks by the RAG complex on one immunoglobulin allele induces ATM-dependent repositioning of the other allele to pericentromeric heterochromatin, preventing accessibility to the RAG complex and recombination of the second allele. In the RAG complex, RAG2 is not the catalytic component but is required for all known catalytic activities mediated by RAG1. It probably acts as a sensor of chromatin state that recruits the RAG complex to H3K4me3. In Mus musculus (Mouse), this protein is V(D)J recombination-activating protein 2 (Rag2).